The primary structure comprises 365 residues: L-lactate oxidase (365 aa).

The FMN hydroxy acid dehydrogenase domain occupies 2 to 365; that stretch reads TAISSPINLF…QDIDTSFLHL (364 aa). Pyruvate is bound at residue tyrosine 28. Residues 81 to 83, serine 110, and glutamine 135 contribute to the FMN site; that span reads PMA. A pyruvate-binding site is contributed by tyrosine 137. Residue threonine 163 participates in FMN binding. A pyruvate-binding site is contributed by arginine 172. Residues lysine 239 and serine 261 each contribute to the FMN site. Residues histidine 263 and arginine 266 each contribute to the pyruvate site. Histidine 263 functions as the Proton acceptor in the catalytic mechanism. Residues 294-298 and arginine 318 each bind FMN; that span reads DGGIR.

This sequence belongs to the FMN-dependent alpha-hydroxy acid dehydrogenase family. As to quaternary structure, homotetramer. Requires FMN as cofactor.

It catalyses the reaction (S)-lactate + O2 = pyruvate + H2O2. It carries out the reaction glyoxylate + O2 + H2O = oxalate + H2O2 + H(+). Its function is as follows. Catalyzes the oxidation of (S)-lactate (L-lactate) to pyruvate, with a reduction of O2 to H2O2. In extant N2-fixing cyanobacteria such as Nostoc, this enzyme primarily serves as an O2-scavenging enzyme, protecting nitrogenase that is extremely sensitive to O2, and is therefore an essential partner in N2 fixation. Also shows clear oxidase activity with glyoxylate in vitro, and low activity with glycerate, hydroxypyruvate and glycolate. The very low glycolate oxidase activity indicates that this enzyme is unlikely to be involved in photorespiratory glycolate metabolism, a pathway that seems to exist in this cyanobacterium, but in which the oxidation of glycolate is taken over by glycolate dehydrogenase (GlcD). Is not able to use D-lactate as substrate and does not show any dehydrogenase activity with NAD(+) or NADP(+). This is L-lactate oxidase from Nostoc sp. (strain PCC 7120 / SAG 25.82 / UTEX 2576).